The following is a 95-amino-acid chain: Large ribosomal subunit protein bL27 (95 aa).

A propeptide spanning residues 1–9 is cleaved from the precursor; sequence MLNMNLQFF.

The protein belongs to the bacterial ribosomal protein bL27 family. In terms of processing, the N-terminus is cleaved by ribosomal processing cysteine protease Prp.

The chain is Large ribosomal subunit protein bL27 from Agathobacter rectalis (strain ATCC 33656 / DSM 3377 / JCM 17463 / KCTC 5835 / VPI 0990) (Eubacterium rectale).